The sequence spans 324 residues: Adducin-related protein C1289.14 (324 aa).

It belongs to the aldolase class II family. Adducin subfamily.

This is Adducin-related protein C1289.14 from Schizosaccharomyces pombe (strain 972 / ATCC 24843) (Fission yeast).